The chain runs to 269 residues: MTLKIGIVGAGGRMGRNLITAVHNAEGVELGAAFERKGSSLVGADAGEVAGIGATGVKISDDLSQNTNFDVLIDFTRPEGTLEHIKFCVANGKKMVIGTTGFDDAGKQAIQAAAEQISIVFASNYSVGVNLVFKLLEKAAKVMGDYCDIEVIEAHHRHKVDAPSGTALSMGEHIAKTLGRDLKTHGVFAREGITGERKRDEIGFATIRAGDVVGEHSVWFADEGERVEIAHKALSRMTFANGAVRAAKWLNTKQNGLFDMTDVLDLNNL.

NAD(+) is bound by residues 9 to 14 (GAGGRM) and E35. Residue R36 participates in NADP(+) binding. Residues 98-100 (GTT) and 122-125 (ASNY) each bind NAD(+). The Proton donor/acceptor role is filled by H155. H156 is a (S)-2,3,4,5-tetrahydrodipicolinate binding site. K159 serves as the catalytic Proton donor. 165-166 (GT) is a (S)-2,3,4,5-tetrahydrodipicolinate binding site.

This sequence belongs to the DapB family.

It localises to the cytoplasm. It carries out the reaction (S)-2,3,4,5-tetrahydrodipicolinate + NAD(+) + H2O = (2S,4S)-4-hydroxy-2,3,4,5-tetrahydrodipicolinate + NADH + H(+). The catalysed reaction is (S)-2,3,4,5-tetrahydrodipicolinate + NADP(+) + H2O = (2S,4S)-4-hydroxy-2,3,4,5-tetrahydrodipicolinate + NADPH + H(+). It functions in the pathway amino-acid biosynthesis; L-lysine biosynthesis via DAP pathway; (S)-tetrahydrodipicolinate from L-aspartate: step 4/4. Functionally, catalyzes the conversion of 4-hydroxy-tetrahydrodipicolinate (HTPA) to tetrahydrodipicolinate. The chain is 4-hydroxy-tetrahydrodipicolinate reductase from Actinobacillus pleuropneumoniae serotype 3 (strain JL03).